Here is a 367-residue protein sequence, read N- to C-terminus: bZIP transcription factor 18 (367 aa).

Residues Met1 to Gly57 form a disordered region. Positions His38–Glu47 are enriched in basic and acidic residues. At Ser70 the chain carries Phosphoserine. Residues Ser79–Ser124 are disordered. Low complexity predominate over residues Gly82–Asp96. The bZIP domain occupies Asp148–Leu211. The tract at residues Lys150–Arg171 is basic motif. A coiled-coil region spans residues Lys166–Glu245. The leucine-zipper stretch occupies residues Leu176 to Leu190. 3 stretches are compositionally biased toward polar residues: residues Gln294–Thr309, Ala317–Tyr328, and Phe354–Met367. Disordered regions lie at residues Gln294–Glu330 and Leu343–Met367.

In terms of assembly, interacts with NEAP1. Forms homodimer and heterodimer with bZIP34 and bZIP61. In terms of tissue distribution, ubiquitous. Strongly expressed in mature pollen.

It is found in the nucleus. Its subcellular location is the nucleoplasm. The protein localises to the cytoplasm. The protein resides in the perinuclear region. Its function is as follows. Transcription factor that may participate with bZIP34 in the gametophytic control of pollen development. This is bZIP transcription factor 18 from Arabidopsis thaliana (Mouse-ear cress).